The following is an 82-amino-acid chain: uncharacterized protein (82 aa).

The 72-residue stretch at 11–82 (NVGIYVRVST…HIEQGIMTHC (72 aa)) folds into the Resolvase/invertase-type recombinase catalytic domain. Residue serine 19 is the O-(5'-phospho-DNA)-serine intermediate of the active site.

The protein belongs to the site-specific recombinase resolvase family.

This is an uncharacterized protein from Bacillus phage phi105 (Bacteriophage phi-105).